The primary structure comprises 284 residues: Bifunctional protein FolD (284 aa).

Residues 165–167 (GRS), Ser-190, and Val-231 contribute to the NADP(+) site.

Belongs to the tetrahydrofolate dehydrogenase/cyclohydrolase family. Homodimer.

It carries out the reaction (6R)-5,10-methylene-5,6,7,8-tetrahydrofolate + NADP(+) = (6R)-5,10-methenyltetrahydrofolate + NADPH. It catalyses the reaction (6R)-5,10-methenyltetrahydrofolate + H2O = (6R)-10-formyltetrahydrofolate + H(+). The protein operates within one-carbon metabolism; tetrahydrofolate interconversion. In terms of biological role, catalyzes the oxidation of 5,10-methylenetetrahydrofolate to 5,10-methenyltetrahydrofolate and then the hydrolysis of 5,10-methenyltetrahydrofolate to 10-formyltetrahydrofolate. This chain is Bifunctional protein FolD, found in Brevibacillus brevis (strain 47 / JCM 6285 / NBRC 100599).